Consider the following 317-residue polypeptide: Ribosomal protein L11 methyltransferase (317 aa).

The S-adenosyl-L-methionine site is built by Thr-158, Gly-179, Asp-201, and Asn-244.

The protein belongs to the methyltransferase superfamily. PrmA family.

It is found in the cytoplasm. It catalyses the reaction L-lysyl-[protein] + 3 S-adenosyl-L-methionine = N(6),N(6),N(6)-trimethyl-L-lysyl-[protein] + 3 S-adenosyl-L-homocysteine + 3 H(+). Functionally, methylates ribosomal protein L11. This is Ribosomal protein L11 methyltransferase from Streptococcus agalactiae serotype Ia (strain ATCC 27591 / A909 / CDC SS700).